A 186-amino-acid chain; its full sequence is Alkyl hydroperoxide reductase AhpD (186 aa).

The Proton donor role is filled by cysteine 131. Cysteines 131 and 134 form a disulfide. The active-site Cysteine sulfenic acid (-SOH) intermediate is the cysteine 134.

This sequence belongs to the AhpD family.

The enzyme catalyses N(6)-[(R)-dihydrolipoyl]-L-lysyl-[lipoyl-carrier protein] + a hydroperoxide = N(6)-[(R)-lipoyl]-L-lysyl-[lipoyl-carrier protein] + an alcohol + H2O. Functionally, antioxidant protein with alkyl hydroperoxidase activity. Required for the reduction of the AhpC active site cysteine residues and for the regeneration of the AhpC enzyme activity. The chain is Alkyl hydroperoxide reductase AhpD from Rhodospirillum centenum (strain ATCC 51521 / SW).